The sequence spans 1056 residues: MPAKPQVDGHTLVDAFCCANIFTETGALKPRSDKVWMDISNQLKGAISAKTLNFYARINRNNMITVVKERCGIQQLDTSANLTLNSTFPDDDPEFQITEASKNGPLPILYFNLELDLELWRSIAPKKDQKTEKLQPNWTDTMAKLIYKKVPLPCAFNFRKAKLSDKVDNIWLRIEGYCNDCSSILKGHCLVKPDEQCGIMISVSVPDTRGIPHNKKRRCTGSRRLEIGNELILKKAALWRKEATDNMNDDDPEPSYIPNLPTLRKLREEATNRHLGITKDRDPVSSLYLKKYEGELAGCILDIGLDEFFCIYCTGTQVKTYASRIKTIRKISIDATGSVVLPIQKPNGDSSYVFLYQIVMEGDDSIFPVFQMLSAKHDTASIQFWLSRFISKSGHFPLEVVSDFSLALLNGISLSFNECRIATYIKKCFHSLLMEERTDLPPCYIRLDIAHLIKMICRKNVFKSKLPNLKDFYTRCIGLATTCETKDSFAELIKSVLIVALSQSSGEDEKGDILSSYRNEKYLLARIATFTAPDHKETIEDNCIPEDQEEIDEDVTDFISNIKIAAEEEALNCNSVNCRPNPYFLPELMPPLIKLCKYFVLWTNVMKEKFCSKYDVGSSALVEAYFKDLKNTDMSIFHRPVRADKFVVQHIRCIEAVCKLERAAMKRKTVKTPSFIKENAPKKMCSKETKGFLEEILEESEVEYLLQEENWKVKNKTIKPTEGNDAEDNDTDDENKEMDLSEQPKEKPRGKYLKKCPNVELLYNRPHRRKQDEILHNGGSMGPVWIGKQLLQFKNTCPFDSLVEILSTAYIDNFYYKSLLDDFYTDNLTIELVKKYAVEGVSSSLYCDRGLVLKSFFDEKHQIIKCDANIGSFIEKALNGVPSASSHRTHIKNNHDCRNQKYIHHRLEVIDVEKVGHLDVQEVVIPFIDEFFARTDGECKICGGQQILERQPGPHVILDIEFAMDAFHQIHHNGLPGTTTLLQVPEEILIQEKKYILSGAIEYVPAMGGEIGHYIAYCRRVIGSWEVHNDMCRQWKKFSALNTKMTLHILIYTRKN.

The interval 716-749 is disordered; the sequence is KTIKPTEGNDAEDNDTDDENKEMDLSEQPKEKPR. Over residues 724–736 the composition is skewed to acidic residues; that stretch reads NDAEDNDTDDENK. The segment covering 737–749 has biased composition (basic and acidic residues); that stretch reads EMDLSEQPKEKPR.

It localises to the nucleus. Its function is as follows. May be involved in the transposition of NOF-FB and other FB elements. This chain is 120.7 kDa protein in NOF-FB transposable element (NOF), found in Drosophila melanogaster (Fruit fly).